The primary structure comprises 363 residues: Peptide chain release factor 1 (363 aa).

Gln237 carries the N5-methylglutamine modification. Over residues 284 to 296 (EDEKRRSAEESTR) the composition is skewed to basic and acidic residues. A disordered region spans residues 284–305 (EDEKRRSAEESTRRSLVASGDR).

It belongs to the prokaryotic/mitochondrial release factor family. In terms of processing, methylated by PrmC. Methylation increases the termination efficiency of RF1.

The protein localises to the cytoplasm. Its function is as follows. Peptide chain release factor 1 directs the termination of translation in response to the peptide chain termination codons UAG and UAA. This chain is Peptide chain release factor 1, found in Shewanella sp. (strain MR-4).